The following is a 277-amino-acid chain: Glutamate racemase (277 aa).

Substrate contacts are provided by residues 16–17 and 48–49; these read DS and YG. Cys79 (proton donor/acceptor) is an active-site residue. 80-81 is a substrate binding site; the sequence is NT. Catalysis depends on Cys191, which acts as the Proton donor/acceptor. 192–193 is a substrate binding site; sequence TH.

It belongs to the aspartate/glutamate racemases family.

It carries out the reaction L-glutamate = D-glutamate. It functions in the pathway cell wall biogenesis; peptidoglycan biosynthesis. Provides the (R)-glutamate required for cell wall biosynthesis. The chain is Glutamate racemase from Symbiobacterium thermophilum (strain DSM 24528 / JCM 14929 / IAM 14863 / T).